The sequence spans 349 residues: Rhodopsin (349 aa).

At 1–33 (TEGPYFYIPMSNATGIVRSPYEYPQYYLVYPAA) the chain is on the extracellular side. An N-linked (GlcNAc...) asparagine glycan is attached at Asn-12. Residues 34–58 (YAVLGAYMFFLIIFGFPVNFLTLYV) form a helical membrane-spanning segment. Over 59–70 (TIEHKKLRTPLN) the chain is Cytoplasmic. A helical membrane pass occupies residues 71-93 (YILLNLAVADLFMVIGGFTTTIY). The Extracellular segment spans residues 94–107 (TSMHGYFVLGRLGC). Cysteines 107 and 184 form a disulfide. Residues 108–130 (NLEGFSATLGGMIGLWSLVVLAI) traverse the membrane as a helical segment. The 'Ionic lock' involved in activated form stabilization signature appears at 131-133 (ERW). Over 131 to 149 (ERWVVVCKPMSNFRFGENH) the chain is Cytoplasmic. Residues 150-170 (AIMGVTLTWVMGLACTVPPLV) traverse the membrane as a helical segment. Topologically, residues 171–199 (GWSRYIPEGMQCSCGIDYYTRAEGFNNDS) are extracellular. Asn-197 carries N-linked (GlcNAc...) asparagine glycosylation. Residues 200–221 (YVLYMFVCHFLIPLVVIFFCYG) traverse the membrane as a helical segment. The Cytoplasmic segment spans residues 222–249 (RLLCAVKEAAAAQQESETTQRAEREVTR). Residues 250 to 271 (MVILMVIGFLVCWLPYASVAWY) form a helical membrane-spanning segment. At 272-283 (IFTHQGSEFGPL) the chain is on the extracellular side. Residues 284 to 305 (FMTIPAFFAKSSSIYNPVIYIC) traverse the membrane as a helical segment. Lys-293 carries the post-translational modification N6-(retinylidene)lysine. Topologically, residues 306 to 349 (MNKQFRQCMLTTLFCGKNPFEEEEGASSTKTEASSASSSSVSPA) are cytoplasmic. The S-palmitoyl cysteine moiety is linked to residue Cys-320. Residues 326–349 (EEEEGASSTKTEASSASSSSVSPA) form a disordered region. Residues 331–349 (ASSTKTEASSASSSSVSPA) are compositionally biased toward low complexity.

Belongs to the G-protein coupled receptor 1 family. Opsin subfamily. Phosphorylated on some or all of the serine and threonine residues present in the C-terminal region. Post-translationally, contains one covalently linked retinal chromophore.

The protein resides in the membrane. The protein localises to the cell projection. Its subcellular location is the cilium. It is found in the photoreceptor outer segment. Functionally, photoreceptor required for image-forming vision at low light intensity. While most salt water fish species use retinal as chromophore, most freshwater fish use 3-dehydroretinal, or a mixture of retinal and 3-dehydroretinal. Light-induced isomerization of 11-cis to all-trans retinal triggers a conformational change that activates signaling via G-proteins. Subsequent receptor phosphorylation mediates displacement of the bound G-protein alpha subunit by arrestin and terminates signaling. In Myripristis violacea (Lattice soldierfish), this protein is Rhodopsin (rho).